Consider the following 216-residue polypeptide: Uracil phosphoribosyltransferase (216 aa).

Residues Arg85, Arg110, and 136 to 144 (DPMLATGNS) each bind 5-phospho-alpha-D-ribose 1-diphosphate. Uracil-binding positions include Ile201 and 206-208 (GDA). Asp207 provides a ligand contact to 5-phospho-alpha-D-ribose 1-diphosphate.

This sequence belongs to the UPRTase family. Mg(2+) serves as cofactor.

The enzyme catalyses UMP + diphosphate = 5-phospho-alpha-D-ribose 1-diphosphate + uracil. It participates in pyrimidine metabolism; UMP biosynthesis via salvage pathway; UMP from uracil: step 1/1. With respect to regulation, allosterically activated by GTP. Catalyzes the conversion of uracil and 5-phospho-alpha-D-ribose 1-diphosphate (PRPP) to UMP and diphosphate. The protein is Uracil phosphoribosyltransferase of Rhodospirillum centenum (strain ATCC 51521 / SW).